A 319-amino-acid chain; its full sequence is Aspartate carbamoyltransferase catalytic subunit (319 aa).

Carbamoyl phosphate contacts are provided by R57 and T58. Residue K85 participates in L-aspartate binding. Carbamoyl phosphate-binding residues include R107, H140, and Q143. Residues R173 and R227 each coordinate L-aspartate. Carbamoyl phosphate contacts are provided by G268 and P269.

It belongs to the aspartate/ornithine carbamoyltransferase superfamily. ATCase family. As to quaternary structure, heterododecamer (2C3:3R2) of six catalytic PyrB chains organized as two trimers (C3), and six regulatory PyrI chains organized as three dimers (R2).

The catalysed reaction is carbamoyl phosphate + L-aspartate = N-carbamoyl-L-aspartate + phosphate + H(+). The protein operates within pyrimidine metabolism; UMP biosynthesis via de novo pathway; (S)-dihydroorotate from bicarbonate: step 2/3. Functionally, catalyzes the condensation of carbamoyl phosphate and aspartate to form carbamoyl aspartate and inorganic phosphate, the committed step in the de novo pyrimidine nucleotide biosynthesis pathway. The polypeptide is Aspartate carbamoyltransferase catalytic subunit (Mycobacterium tuberculosis (strain ATCC 25177 / H37Ra)).